The sequence spans 254 residues: Low affinity immunoglobulin gamma Fc region receptor III-A (254 aa).

A signal peptide spans 1–20 (MWHLLPPSALLLLISSVTKA). Residues 21–209 (ADPSKAVVLL…IAPLFPLWQQ (189 aa)) are Extracellular-facing. Ig-like C2-type domains follow at residues 23–104 (PSKA…VQLQ) and 121–174 (KGES…YYCR). N-linked (GlcNAc...) asparagine glycans are attached at residues asparagine 42, asparagine 63, asparagine 166, and asparagine 181. Intrachain disulfides connect cysteine 47/cysteine 90 and cysteine 129/cysteine 173. Residues 210–230 (IAFCLMMGLLFAVDTGLYFFV) form a helical membrane-spanning segment. The Cytoplasmic portion of the chain corresponds to 231 to 254 (RRDLRRSMVHKEEYNFKWSQAQDK).

Forms a heterooligomeric complex with ITAM-containing signaling subunits FCER1G. Interacts (via transmembrane domain) with signaling subunits; this interaction is a prerequisite for receptor complex expression on the cell surface and intracellular signal transduction. Binds the Fc region of antigen-complexed IgG. In terms of processing, N-glycosylated. Post-translationally, phosphorylated following receptor ligation.

The protein localises to the cell membrane. Its function is as follows. Receptor for the invariable Fc fragment of immunoglobulin gamma (IgG). Binds with intermediate affinity to both IgG2a and IgG2b. Can bind to IgG2a and IgG2b monomers. Does not display binding to IgG1 or IgG3. Recognizes neutralizing virus-specific IgGs displayed on the cell surface of infected cells and triggers antibody-dependent cellular cytotoxicity (ADCC). Confers protection to lethal influenza virus infection. On splenic dendritic cells, uptakes antigen immune complexes and efficiently divert them into MHC class I and II antigen presentation pathways to provide for superior priming of CD4-positive and CD8-positive T cell immune responses. Mediates neutrophil activation by IgG complexes redundantly with FCGR2A. Plays a role in promoting bone resorption by enhancing osteoclast differentiation following binding to IgG2a. Also acts as a receptor for the Fc region of immunoglobulin epsilon (IgE). Binds with low affinity to both the a and b allotypes of IgE. Has also been shown to bind to IgE allotype a only but not to allotype b. Binds aggregated IgE but not the monomeric form and bound monomeric IgG is readily displaced by IgE complexes. Binding to IgE promotes macrophage-mediated phagocytosis, antigen presentation to T cells, production of pro-inflammatory cytokines and the late phase of cutaneous allergic reactions. Mediates enhanced ADCC in response to afucosylated IgGs. The sequence is that of Low affinity immunoglobulin gamma Fc region receptor III-A from Cavia porcellus (Guinea pig).